The chain runs to 616 residues: 2-isopropylmalate synthase (616 aa).

The disordered stretch occupies residues 1–34 (MSPNDAFISAPAKIETPVGPRNEGQPAWNKQRGS). Residues 67–341 (PQWCAVDLRD…DPQLDFTDIR (275 aa)) form the Pyruvate carboxyltransferase domain. Positions 76, 280, 282, and 316 each coordinate Mg(2+). Residues 490-616 (RTAPVEQIAL…NHEAVLAGGV (127 aa)) are regulatory domain.

This sequence belongs to the alpha-IPM synthase/homocitrate synthase family. LeuA type 2 subfamily. As to quaternary structure, homodimer. The cofactor is Mg(2+).

Its subcellular location is the cytoplasm. The catalysed reaction is 3-methyl-2-oxobutanoate + acetyl-CoA + H2O = (2S)-2-isopropylmalate + CoA + H(+). It participates in amino-acid biosynthesis; L-leucine biosynthesis; L-leucine from 3-methyl-2-oxobutanoate: step 1/4. Functionally, catalyzes the condensation of the acetyl group of acetyl-CoA with 3-methyl-2-oxobutanoate (2-ketoisovalerate) to form 3-carboxy-3-hydroxy-4-methylpentanoate (2-isopropylmalate). The chain is 2-isopropylmalate synthase from Corynebacterium glutamicum (strain R).